The primary structure comprises 319 residues: Methionyl-tRNA formyltransferase (319 aa).

112 to 115 (SLLP) lines the (6S)-5,6,7,8-tetrahydrofolate pocket.

This sequence belongs to the Fmt family.

It catalyses the reaction L-methionyl-tRNA(fMet) + (6R)-10-formyltetrahydrofolate = N-formyl-L-methionyl-tRNA(fMet) + (6S)-5,6,7,8-tetrahydrofolate + H(+). Its function is as follows. Attaches a formyl group to the free amino group of methionyl-tRNA(fMet). The formyl group appears to play a dual role in the initiator identity of N-formylmethionyl-tRNA by promoting its recognition by IF2 and preventing the misappropriation of this tRNA by the elongation apparatus. This chain is Methionyl-tRNA formyltransferase, found in Pelobacter propionicus (strain DSM 2379 / NBRC 103807 / OttBd1).